The following is a 119-amino-acid chain: Large ribosomal subunit protein bL19 (119 aa).

Belongs to the bacterial ribosomal protein bL19 family.

In terms of biological role, this protein is located at the 30S-50S ribosomal subunit interface and may play a role in the structure and function of the aminoacyl-tRNA binding site. This is Large ribosomal subunit protein bL19 from Idiomarina loihiensis (strain ATCC BAA-735 / DSM 15497 / L2-TR).